The sequence spans 333 residues: Foldase protein PrsA (333 aa).

Positions 1-19 are cleaved as a signal peptide; it reads MKKRHLLIAGLACMTILGA. The N-palmitoyl cysteine moiety is linked to residue Cys-20. Cys-20 carries the S-diacylglycerol cysteine lipid modification. The 91-residue stretch at 155-245 folds into the PpiC domain; the sequence is LIEVEASHIL…YGYHIILVTD (91 aa). The segment at 291-333 is disordered; that stretch reads GLFDLPDAPPVEDTPEIDGEDASDEAEDQAEDADENAEEEDES. Residues 303-333 are compositionally biased toward acidic residues; sequence DTPEIDGEDASDEAEDQAEDADENAEEEDES.

This sequence belongs to the PrsA family.

The protein localises to the cell membrane. The enzyme catalyses [protein]-peptidylproline (omega=180) = [protein]-peptidylproline (omega=0). In terms of biological role, plays a major role in protein secretion by helping the post-translocational extracellular folding of several secreted proteins. The protein is Foldase protein PrsA of Halalkalibacterium halodurans (strain ATCC BAA-125 / DSM 18197 / FERM 7344 / JCM 9153 / C-125) (Bacillus halodurans).